The sequence spans 423 residues: uncharacterized protein (423 aa).

This sequence belongs to the mycobacterial PPE family.

Functionally, could be required for host endothelial-cell invasion and/or intracellular survival. This is an uncharacterized protein from Mycobacterium tuberculosis (strain CDC 1551 / Oshkosh).